A 350-amino-acid chain; its full sequence is Probable poly-beta-1,6-N-acetyl-D-glucosamine export protein (350 aa).

10 helical membrane-spanning segments follow: residues 7-29, 44-66, 79-101, 116-138, 145-167, 187-204, 211-233, 243-262, 269-291, and 306-328; these read ELVYLRAIICAIIIITHLLTQIT, FYIRNIVIFGTPCFIILSQLLTT, TRVKYILIPYILMGLFYSYSESL, LLGQWYGYFIVVIMQFFILSYII, LFNSKILLLLSFILQQSFLYYFT, IIFGWIFYFFLGAYMGYN, FLERYLVIMIVLAVATYFVFIAL, SFSYSLTPYNSIMFIVILGI, ILFNTIQMISAFSFFIYLLHPII, and TMVFLAISLLFILGLCIGVGMIL.

This sequence belongs to the acyltransferase 3 family.

The protein resides in the cell membrane. Functionally, presumably involved in the export of the biofilm adhesin polysaccharide poly-beta-1,6-N-acetyl-D-glucosamine (PNAG, also referred to as PIA) across the cell membrane. The polypeptide is Probable poly-beta-1,6-N-acetyl-D-glucosamine export protein (icaC) (Staphylococcus aureus (strain Mu50 / ATCC 700699)).